Consider the following 464-residue polypeptide: Putative guanine nucleotide-binding protein subunit alpha (464 aa).

A G-alpha domain is found at 33-415; it reads HSKLKRGDGP…ETKRDKYNEK (383 aa). Residues 36–49 form a G1 motif region; that stretch reads LKRGDGPGESGKST. GTP is bound by residues 41-48, 147-151, 214-220, 239-243, 268-271, and 310-313; these read GPGESGKS, DVGGQ, LRSRTKT, RNRD, and TSQS. Position 48 (Ser48) interacts with Mg(2+). A G2 motif region spans residues 212–220; that stretch reads DVLRSRTKT. Thr220 lines the Mg(2+) pocket. Positions 235 to 244 are G3 motif; it reads FRMVDVGGQR. The segment at 306 to 313 is G4 motif; that stretch reads VMFLTSQS. The segment at 382 to 387 is G5 motif; it reads GYSGTC.

The protein in the N-terminal section; belongs to the G-alpha family. In the C-terminal section; belongs to the class-II aminoacyl-tRNA synthetase family. As to quaternary structure, g proteins are composed of 3 units; alpha, beta and gamma. The alpha chain contains the guanine nucleotide binding site.

Guanine nucleotide-binding proteins (G proteins) are involved as modulators or transducers in various transmembrane signaling systems. This is Putative guanine nucleotide-binding protein subunit alpha from Leishmania donovani.